Consider the following 353-residue polypeptide: MNLPDRKKALEAAVAYIEKQFGAGSIMSLGRHSATHEISTIKTGALSLDLALGIHGVPKGRVIEIFGPESSGKTTLATHIVANAQKMGGVAAYIDAEHALDPSYASLIGVNIDDLMISQPDCGEDALSIAELLARSGAVDVIVIDSVAALVPKSELEGDIGDVHVGLQARMMSQALRKLTATLSRSQTCAVFINQIREKIGVSFGNPETTTGGRALKFYSSIRLDIRRIGSIKGSDNSDIGNRIKVKVAKNKLAPPFRIAEFDILFNEGISSAGCILDLAVEYNIIEKKGSWFNYQEKKLGQGREFVREELKRNRKLFEEIEKRIYDVIAANKTPSVHANETPQEVPAQTVEA.

ATP is bound at residue 67 to 74; sequence GPESSGKT.

It belongs to the RecA family.

The protein localises to the cytoplasm. Can catalyze the hydrolysis of ATP in the presence of single-stranded DNA, the ATP-dependent uptake of single-stranded DNA by duplex DNA, and the ATP-dependent hybridization of homologous single-stranded DNAs. It interacts with LexA causing its activation and leading to its autocatalytic cleavage. The chain is Protein RecA from Chlamydia pneumoniae (Chlamydophila pneumoniae).